A 143-amino-acid polypeptide reads, in one-letter code: Small ribosomal subunit protein uS12 (143 aa).

Position 62 is a hydroxyproline (Pro62).

This sequence belongs to the universal ribosomal protein uS12 family. In terms of assembly, component of the 40S small ribosomal subunit.

The protein localises to the cytoplasm. The protein resides in the cytosol. Its subcellular location is the rough endoplasmic reticulum. The sequence is that of Small ribosomal subunit protein uS12 (rps-23) from Caenorhabditis elegans.